The sequence spans 323 residues: tRNA U34 carboxymethyltransferase (323 aa).

Carboxy-S-adenosyl-L-methionine is bound by residues lysine 91, tryptophan 105, lysine 110, glycine 130, 152 to 154 (DPT), 181 to 182 (IE), methionine 196, tyrosine 200, and arginine 315.

Belongs to the class I-like SAM-binding methyltransferase superfamily. CmoB family. In terms of assembly, homotetramer.

The catalysed reaction is carboxy-S-adenosyl-L-methionine + 5-hydroxyuridine(34) in tRNA = 5-carboxymethoxyuridine(34) in tRNA + S-adenosyl-L-homocysteine + H(+). Its function is as follows. Catalyzes carboxymethyl transfer from carboxy-S-adenosyl-L-methionine (Cx-SAM) to 5-hydroxyuridine (ho5U) to form 5-carboxymethoxyuridine (cmo5U) at position 34 in tRNAs. The polypeptide is tRNA U34 carboxymethyltransferase (Shigella flexneri serotype 5b (strain 8401)).